Reading from the N-terminus, the 251-residue chain is Capsid protein (251 aa).

The tract at residues 1–29 is disordered; it reads MPKRDAPWRSMAGTSKVSRNANYSPRSGI. Residues 3–20 carry the Bipartite nuclear localization signal motif; the sequence is KRDAPWRSMAGTSKVSRN. A compositionally biased stretch (polar residues) spans 12–25; it reads AGTSKVSRNANYSP. The Nuclear localization signal motif lies at 35–49; it reads KAAEWVNRPMYRKPR. The segment at 63–80 is a zinc-finger region; the sequence is CEGPCKVQSFEQRHDILH. Positions 96–117 match the Nuclear export signal motif; sequence ITHRVGKRFCVKSVYILGKIWM. The short motif at 195-242 is the Bipartite nuclear localization signal element; that stretch reads RRFWKVNNHVVYNHQEAGKYENHTENALLLYMACTHASNPVYATLKIR.

The protein belongs to the geminiviridae capsid protein family. Homomultimer. Binds to single-stranded and double-stranded viral DNA. Interacts (via nuclear localization signals) with host importin alpha-1a.

The protein resides in the virion. It localises to the host nucleus. Encapsidates the viral DNA into characteristic twinned ('geminate') particles. Binds the genomic viral ssDNA and shuttles it into and out of the cell nucleus. The CP of bipartite geminiviruses is not required for cell-to-cell or systemic movement. The polypeptide is Capsid protein (Solanum tuberosum (Potato)).